The chain runs to 102 residues: NADH-quinone oxidoreductase subunit K (102 aa).

3 helical membrane-spanning segments follow: residues 5–25 (ALTG…FGVL), 30–50 (ILFQ…AFIA), and 63–83 (MFVL…ALFL).

This sequence belongs to the complex I subunit 4L family. NDH-1 is composed of 14 different subunits. Subunits NuoA, H, J, K, L, M, N constitute the membrane sector of the complex.

The protein resides in the cell inner membrane. The catalysed reaction is a quinone + NADH + 5 H(+)(in) = a quinol + NAD(+) + 4 H(+)(out). Functionally, NDH-1 shuttles electrons from NADH, via FMN and iron-sulfur (Fe-S) centers, to quinones in the respiratory chain. The immediate electron acceptor for the enzyme in this species is believed to be ubiquinone. Couples the redox reaction to proton translocation (for every two electrons transferred, four hydrogen ions are translocated across the cytoplasmic membrane), and thus conserves the redox energy in a proton gradient. This Rhodopseudomonas palustris (strain BisB18) protein is NADH-quinone oxidoreductase subunit K.